A 505-amino-acid chain; its full sequence is Probable ribonuclease FAU-1 (505 aa).

The interval 389 to 408 (ISGHGSGTYDELGTPRESGD) is disordered.

This sequence belongs to the FAU-1 family.

Its function is as follows. Probable RNase involved in rRNA stability through maturation and/or degradation of precursor rRNAs. Binds to RNA in loop regions with AU-rich sequences. The polypeptide is Probable ribonuclease FAU-1 (Haloquadratum walsbyi (strain DSM 16790 / HBSQ001)).